Reading from the N-terminus, the 249-residue chain is Small ribosomal subunit protein uS3 (249 aa).

Positions 23-94 (LNEFFTRELS…TVELYAEKVQ (72 aa)) constitute a KH type-2 domain. S32, S37, S106, and S141 each carry phosphoserine.

It belongs to the universal ribosomal protein uS3 family. As to quaternary structure, component of the small ribosomal subunit (SSU). Mature yeast ribosomes consist of a small (40S) and a large (60S) subunit. The 40S small subunit contains 1 molecule of ribosomal RNA (18S rRNA) and at least 33 different proteins. The large 60S subunit contains 3 rRNA molecules (25S, 5.8S and 5S rRNA) and at least 46 different proteins.

Its subcellular location is the cytoplasm. Component of the ribosome, a large ribonucleoprotein complex responsible for the synthesis of proteins in the cell. The small ribosomal subunit (SSU) binds messenger RNAs (mRNAs) and translates the encoded message by selecting cognate aminoacyl-transfer RNA (tRNA) molecules. The large subunit (LSU) contains the ribosomal catalytic site termed the peptidyl transferase center (PTC), which catalyzes the formation of peptide bonds, thereby polymerizing the amino acids delivered by tRNAs into a polypeptide chain. The nascent polypeptides leave the ribosome through a tunnel in the LSU and interact with protein factors that function in enzymatic processing, targeting, and the membrane insertion of nascent chains at the exit of the ribosomal tunnel. This is Small ribosomal subunit protein uS3 (rps3) from Schizosaccharomyces pombe (strain 972 / ATCC 24843) (Fission yeast).